Consider the following 218-residue polypeptide: uncharacterized protein (218 aa).

4 helical membrane passes run 10–30, 55–75, 147–167, and 175–195; these read IPPL…SLGI, IGVG…GYSI, VTGG…AGMA, and FSWI…ILLR.

Belongs to the DedA family.

It is found in the cell membrane. This is an uncharacterized protein from Mycobacterium tuberculosis (strain CDC 1551 / Oshkosh).